Here is a 262-residue protein sequence, read N- to C-terminus: Acyl-[acyl-carrier-protein]--UDP-N-acetylglucosamine O-acyltransferase (262 aa).

The protein belongs to the transferase hexapeptide repeat family. LpxA subfamily. In terms of assembly, homotrimer.

The protein localises to the cytoplasm. The catalysed reaction is a (3R)-hydroxyacyl-[ACP] + UDP-N-acetyl-alpha-D-glucosamine = a UDP-3-O-[(3R)-3-hydroxyacyl]-N-acetyl-alpha-D-glucosamine + holo-[ACP]. It participates in glycolipid biosynthesis; lipid IV(A) biosynthesis; lipid IV(A) from (3R)-3-hydroxytetradecanoyl-[acyl-carrier-protein] and UDP-N-acetyl-alpha-D-glucosamine: step 1/6. Its function is as follows. Involved in the biosynthesis of lipid A, a phosphorylated glycolipid that anchors the lipopolysaccharide to the outer membrane of the cell. The chain is Acyl-[acyl-carrier-protein]--UDP-N-acetylglucosamine O-acyltransferase from Burkholderia mallei (strain NCTC 10247).